The primary structure comprises 308 residues: Urease subunit beta (308 aa).

The region spanning 131–308 (GGIDTHIHFI…STNPTIPFTK (178 aa)) is the Urease domain. Positions 136, 138, 219, 248, and 274 each coordinate Ni(2+). Lys219 bears the N6-carboxylysine mark.

This sequence belongs to the metallo-dependent hydrolases superfamily. Urease alpha subunit family. Heterohexamer of 3 UreA (alpha) and 3 UreB (beta) subunits. Ni cation serves as cofactor. In terms of processing, carboxylation allows a single lysine to coordinate two nickel ions.

The protein localises to the cytoplasm. It carries out the reaction urea + 2 H2O + H(+) = hydrogencarbonate + 2 NH4(+). The protein operates within nitrogen metabolism; urea degradation; CO(2) and NH(3) from urea (urease route): step 1/1. The chain is Urease subunit beta (ureB) from Helicobacter mustelae.